Reading from the N-terminus, the 146-residue chain is Protein SprT-like (146 aa).

The region spanning 4–142 (NEYVKQVSLE…GRCKGKLRLL (139 aa)) is the SprT-like domain. Position 64 (histidine 64) interacts with Zn(2+). Residue glutamate 65 is part of the active site. Residue histidine 68 participates in Zn(2+) binding.

It belongs to the SprT family. The cofactor is Zn(2+).

The protein resides in the cytoplasm. In Streptococcus gordonii (strain Challis / ATCC 35105 / BCRC 15272 / CH1 / DL1 / V288), this protein is Protein SprT-like.